The sequence spans 457 residues: Exodeoxyribonuclease 7 large subunit (457 aa).

Belongs to the XseA family. Heterooligomer composed of large and small subunits.

It localises to the cytoplasm. The enzyme catalyses Exonucleolytic cleavage in either 5'- to 3'- or 3'- to 5'-direction to yield nucleoside 5'-phosphates.. In terms of biological role, bidirectionally degrades single-stranded DNA into large acid-insoluble oligonucleotides, which are then degraded further into small acid-soluble oligonucleotides. In Photorhabdus laumondii subsp. laumondii (strain DSM 15139 / CIP 105565 / TT01) (Photorhabdus luminescens subsp. laumondii), this protein is Exodeoxyribonuclease 7 large subunit.